The following is a 144-amino-acid chain: Large ribosomal subunit protein uL15 (144 aa).

Residues 1 to 50 (MRLNTLSPAAGAKSAKKRVGRGIGSGLGKTGGRGVKGAGSRSGGGVRAGF) are disordered. Residues 21–50 (RGIGSGLGKTGGRGVKGAGSRSGGGVRAGF) show a composition bias toward gly residues.

It belongs to the universal ribosomal protein uL15 family. Part of the 50S ribosomal subunit.

Binds to the 23S rRNA. This chain is Large ribosomal subunit protein uL15, found in Tolumonas auensis (strain DSM 9187 / NBRC 110442 / TA 4).